Reading from the N-terminus, the 206-residue chain is Small ribosomal subunit protein uS4 (206 aa).

One can recognise an S4 RNA-binding domain in the interval 96-157 (SRLDNVVYRM…KAKKQVRIQE (62 aa)).

This sequence belongs to the universal ribosomal protein uS4 family. Part of the 30S ribosomal subunit. Contacts protein S5. The interaction surface between S4 and S5 is involved in control of translational fidelity.

One of the primary rRNA binding proteins, it binds directly to 16S rRNA where it nucleates assembly of the body of the 30S subunit. In terms of biological role, with S5 and S12 plays an important role in translational accuracy. The polypeptide is Small ribosomal subunit protein uS4 (Neisseria gonorrhoeae (strain ATCC 700825 / FA 1090)).